The primary structure comprises 194 residues: Serine/threonine-protein kinase mos (194 aa).

Residues 47 to 194 form the Protein kinase domain; that stretch reads LCLLNLLGSG…HLDLKPANIF (148 aa). Residues 53–61 and Lys-74 each bind ATP; that span reads LGSGGFGSV. Asp-187 serves as the catalytic Proton acceptor.

Belongs to the protein kinase superfamily. Ser/Thr protein kinase family.

It catalyses the reaction L-seryl-[protein] + ATP = O-phospho-L-seryl-[protein] + ADP + H(+). The catalysed reaction is L-threonyl-[protein] + ATP = O-phospho-L-threonyl-[protein] + ADP + H(+). The protein is Serine/threonine-protein kinase mos (MOS) of Dendroaspis angusticeps (Eastern green mamba).